Here is a 269-residue protein sequence, read N- to C-terminus: Ribosomal RNA small subunit methyltransferase A (269 aa).

Residues His-11, Leu-13, Gly-38, Glu-59, Asp-84, and Asn-105 each contribute to the S-adenosyl-L-methionine site.

The protein belongs to the class I-like SAM-binding methyltransferase superfamily. rRNA adenine N(6)-methyltransferase family. RsmA subfamily.

The protein resides in the cytoplasm. It catalyses the reaction adenosine(1518)/adenosine(1519) in 16S rRNA + 4 S-adenosyl-L-methionine = N(6)-dimethyladenosine(1518)/N(6)-dimethyladenosine(1519) in 16S rRNA + 4 S-adenosyl-L-homocysteine + 4 H(+). In terms of biological role, specifically dimethylates two adjacent adenosines (A1518 and A1519) in the loop of a conserved hairpin near the 3'-end of 16S rRNA in the 30S particle. May play a critical role in biogenesis of 30S subunits. The polypeptide is Ribosomal RNA small subunit methyltransferase A (Acaryochloris marina (strain MBIC 11017)).